The following is a 244-amino-acid chain: Mediator of RNA polymerase II transcription subunit 8 (244 aa).

Positions 6–30 (QEQLKTLEQSRQRLVQLTRSLASLI) form a coiled coil.

It belongs to the Mediator complex subunit 8 family. Component of the Mediator complex.

Its subcellular location is the nucleus. In terms of biological role, component of the Mediator complex, a coactivator involved in the regulated transcription of nearly all RNA polymerase II-dependent genes. Mediator functions as a bridge to convey information from gene-specific regulatory proteins to the basal RNA polymerase II transcription machinery. Mediator is recruited to promoters by direct interactions with regulatory proteins and serves as a scaffold for the assembly of a functional preinitiation complex with RNA polymerase II and the general transcription factors. In Aspergillus oryzae (strain ATCC 42149 / RIB 40) (Yellow koji mold), this protein is Mediator of RNA polymerase II transcription subunit 8 (med8).